A 141-amino-acid polypeptide reads, in one-letter code: Hemoglobin subunit alpha-A (141 aa).

Residues 1–141 form the Globin domain; the sequence is VLSASDKTNV…VAKELTAKYR (141 aa). Position 58 (histidine 58) interacts with O2. Histidine 87 contributes to the heme b binding site.

Belongs to the globin family. Heterotetramer of two alpha chains and two beta chains. As to expression, red blood cells.

Its function is as follows. Involved in oxygen transport from the lung to the various peripheral tissues. In Phalacrocorax carbo (Great cormorant), this protein is Hemoglobin subunit alpha-A (HBAA).